Reading from the N-terminus, the 734-residue chain is Photosystem I P700 chlorophyll a apoprotein A2 (734 aa).

8 helical membrane-spanning segments follow: residues 46-69, 135-158, 175-199, 273-291, 330-353, 369-395, 417-439, and 517-535; these read IFAS…FHVA, LYTG…LHLQ, LNHH…HVAI, IAHH…GHMY, LHFQ…QHIY, AALY…IFFI, AIIS…LYVH, and FLVH…LILV. [4Fe-4S] cluster-binding residues include Cys-559 and Cys-568. 2 consecutive transmembrane segments (helical) span residues 575-596 and 643-665; these read AFYL…YWHW and LSVW…MFLI. Positions 654, 662, and 670 each coordinate chlorophyll a. Residue Trp-671 participates in phylloquinone binding. Residues 707–727 traverse the membrane as a helical segment; it reads LVGLAHFSVGYIFTYAAFLIA.

This sequence belongs to the PsaA/PsaB family. As to quaternary structure, the PsaA/B heterodimer binds the P700 chlorophyll special pair and subsequent electron acceptors. PSI consists of a core antenna complex that captures photons, and an electron transfer chain that converts photonic excitation into a charge separation. The eukaryotic PSI reaction center is composed of at least 11 subunits. Requires P700 is a chlorophyll a/chlorophyll a' dimer, A0 is one or more chlorophyll a, A1 is one or both phylloquinones and FX is a shared 4Fe-4S iron-sulfur center. as cofactor.

The protein localises to the plastid. It localises to the chloroplast thylakoid membrane. It carries out the reaction reduced [plastocyanin] + hnu + oxidized [2Fe-2S]-[ferredoxin] = oxidized [plastocyanin] + reduced [2Fe-2S]-[ferredoxin]. Functionally, psaA and PsaB bind P700, the primary electron donor of photosystem I (PSI), as well as the electron acceptors A0, A1 and FX. PSI is a plastocyanin-ferredoxin oxidoreductase, converting photonic excitation into a charge separation, which transfers an electron from the donor P700 chlorophyll pair to the spectroscopically characterized acceptors A0, A1, FX, FA and FB in turn. Oxidized P700 is reduced on the lumenal side of the thylakoid membrane by plastocyanin. The polypeptide is Photosystem I P700 chlorophyll a apoprotein A2 (Staurastrum punctulatum (Green alga)).